The sequence spans 124 residues: Small ribosomal subunit protein uS13 (124 aa).

The disordered stretch occupies residues 95–124; sequence GLPVRGQRTKTNARTRKGPKRTIAGKKKAR.

Belongs to the universal ribosomal protein uS13 family. Part of the 30S ribosomal subunit. Forms a loose heterodimer with protein S19. Forms two bridges to the 50S subunit in the 70S ribosome.

Its function is as follows. Located at the top of the head of the 30S subunit, it contacts several helices of the 16S rRNA. In the 70S ribosome it contacts the 23S rRNA (bridge B1a) and protein L5 of the 50S subunit (bridge B1b), connecting the 2 subunits; these bridges are implicated in subunit movement. Contacts the tRNAs in the A and P-sites. The chain is Small ribosomal subunit protein uS13 from Mycobacteroides abscessus (strain ATCC 19977 / DSM 44196 / CCUG 20993 / CIP 104536 / JCM 13569 / NCTC 13031 / TMC 1543 / L948) (Mycobacterium abscessus).